Here is a 134-residue protein sequence, read N- to C-terminus: Profilin-3 (134 aa).

A disulfide bridge connects residues cysteine 13 and cysteine 118. The Involved in PIP2 interaction motif lies at 84–100 (AVIRGKKGSGGITIKKT). Threonine 114 carries the phosphothreonine modification.

Belongs to the profilin family. Occurs in many kinds of cells as a complex with monomeric actin in a 1:1 ratio. Phosphorylated by MAP kinases.

It localises to the cytoplasm. The protein localises to the cytoskeleton. Functionally, binds to actin and affects the structure of the cytoskeleton. At high concentrations, profilin prevents the polymerization of actin, whereas it enhances it at low concentrations. This chain is Profilin-3, found in Olea europaea (Common olive).